A 238-amino-acid chain; its full sequence is CD63 antigen (238 aa).

Residues 1-11 lie on the Cytoplasmic side of the membrane; the sequence is MAVEGGMKCVK. Residues 12-32 form a helical membrane-spanning segment; sequence FLLYVLLLAFCACAVGLIAIG. At 33-51 the chain is on the extracellular side; the sequence is VAVQVVLKQAITHETTAGS. A helical transmembrane segment spans residues 52–72; the sequence is LLPVVIIAVGAFLFLVAFVGC. The Cytoplasmic segment spans residues 73 to 81; it reads CGACKENYC. A helical transmembrane segment spans residues 82 to 102; it reads LMITFAIFLSLIMLVEVAVAI. The Extracellular segment spans residues 103-203; sequence AGYVFRDQVK…TIAIWLRKNI (101 aa). N-linked (GlcNAc...) asparagine glycosylation is found at N116, N130, N150, and N172. The helical transmembrane segment at 204–224 threads the bilayer; it reads LLVAAAALGIAFVEVLGIIFS. At 225-238 the chain is on the cytoplasmic side; the sequence is CCLVKSIRSGYEVM. A Lysosomal targeting motif motif is present at residues 234–238; it reads GYEVM.

This sequence belongs to the tetraspanin (TM4SF) family. As to quaternary structure, interacts with TIMP1 and ITGB1 and recruits TIMP1 to ITGB1. Interacts with CD9. Identified in a complex with CD9 and ITGB3. Interacts with PMEL. Interacts with KDR/VEGFR2; identified in a complex with ITGB1 and KDR/VEGFR2 and is required to recruit KDR to ITGB1 complexes. Interacts with SYT7. Palmitoylated at a low, basal level in unstimulated platelets. The level of palmitoylation increases when platelets are activated by thrombin (in vitro). Ubiquitous. Strongly expressed in kidney. Detected in spleen, bone marrow, peripheral blood mononuclear cells and macrophages.

The protein resides in the cell membrane. The protein localises to the lysosome membrane. It is found in the late endosome membrane. It localises to the endosome. Its subcellular location is the multivesicular body. The protein resides in the melanosome. The protein localises to the secreted. It is found in the extracellular exosome. It localises to the cell surface. Functions as a cell surface receptor for TIMP1 and plays a role in the activation of cellular signaling cascades. Plays a role in the activation of ITGB1 and integrin signaling, leading to the activation of AKT, FAK/PTK2 and MAP kinases. Promotes cell survival, reorganization of the actin cytoskeleton, cell adhesion, spreading and migration, via its role in the activation of AKT and FAK/PTK2. Plays a role in VEGFA signaling via its role in regulating the internalization of KDR/VEGFR2. Plays a role in intracellular vesicular transport processes, and is required for normal trafficking of the PMEL luminal domain that is essential for the development and maturation of melanocytes. Plays a role in the adhesion of leukocytes onto endothelial cells via its role in the regulation of SELP trafficking. May play a role in mast cell degranulation in response to Ms4a2/FceRI stimulation, but not in mast cell degranulation in response to other stimuli. This chain is CD63 antigen (Cd63), found in Mus musculus (Mouse).